A 930-amino-acid polypeptide reads, in one-letter code: uncharacterized protein (930 aa).

The signal sequence occupies residues 1–20 (MPSFVLWTFHLCSQWFQGLT). Asn137, Asn146, Asn164, Asn210, Asn257, Asn628, Asn717, and Asn799 each carry an N-linked (GlcNAc...) asparagine glycan.

It is found in the secreted. This is an uncharacterized protein from Arthroderma benhamiae (strain ATCC MYA-4681 / CBS 112371) (Trichophyton mentagrophytes).